A 221-amino-acid polypeptide reads, in one-letter code: NEDD8 ultimate buster 1 (221 aa).

UBA domains follow at residues 1 to 19 (LGLR…HIAN), 30 to 76 (EERE…LLHN), and 95 to 135 (SPSQ…LVHN). Residues 136-193 (GGRLPPDLQLSAEDSSSTPSTSPSDSAGTSSASTDEDMETEAVNEILEDIPEHEEDYL) form a disordered region. Positions 146–168 (SAEDSSSTPSTSPSDSAGTSSAS) are enriched in low complexity. The span at 169–193 (TDEDMETEAVNEILEDIPEHEEDYL) shows a compositional bias: acidic residues.

As to quaternary structure, directly interacts with NEDD8 and PSMD4/S5a, a member of the regulatory subunit of the 26S proteasome. Interacts with AIPL1.

The protein resides in the nucleus. In terms of biological role, specific down-regulator of the NEDD8 conjugation system. Recruits NEDD8 and its conjugates to the proteasome for degradation. The chain is NEDD8 ultimate buster 1 (NUB1) from Bos taurus (Bovine).